The sequence spans 89 residues: Endoribonuclease VapD 1 (89 aa).

It belongs to the VapD ribonuclease family. In terms of assembly, homodimer.

In terms of biological role, cleaves ssRNA, mostly between U:A. This Riemerella anatipestifer (Moraxella anatipestifer) protein is Endoribonuclease VapD 1.